The following is an 889-amino-acid chain: Rho GTPase-activating protein 27 (889 aa).

The SH3 domain maps to 6 to 69; that stretch reads VGDVYVLVEH…PAQYVRELPA (64 aa). Positions 104 to 132 are disordered; it reads AGPDGAPEESGGRASSLCGPAQRGAATQR. Phosphoserine is present on residues Ser-156, Ser-216, and Ser-249. 2 WW domains span residues 246–280 and 299–333; these read PLPS…SPFE and VSLE…DEAE. Residues 329 to 341 are compositionally biased toward acidic residues; that stretch reads EDEAENEPEEELE. A disordered region spans residues 329–397; that stretch reads EDEAENEPEE…SPLTTPPGWS (69 aa). Phosphoserine is present on Ser-347. The segment covering 383–395 has biased composition (low complexity); it reads EPGPTSPLTTPPG. One can recognise a WW 3 domain in the interval 411-444; it reads HFTQEQWVRLEDPHGKPYFYNPEDSSVRWELPQV. Residues 447-474 are disordered; that stretch reads PAPRSIHKSSQDGDTPAQASPPEEKVPA. Ser-456 is subject to Phosphoserine. At Thr-461 the chain carries Phosphothreonine. Ser-466 is subject to Phosphoserine. A PH domain is found at 496–612; that stretch reads TLDKAGVLHR…WHKAIAQGIQ (117 aa). Residues 617–655 form a disordered region; that stretch reads ELPPEESESSRVDFGSSERLGSWQEKEEDARPNAAAPAL. Residues 697-886 enclose the Rho-GAP domain; sequence CALAALCERE…LILQQCADIF (190 aa).

Interacts with SH3KBP1/CIN85. Expressed in germinal center B-cell, spleen, chronic lymphocytic leukemia, pancreatic cancer and lung cancer.

Its subcellular location is the cytoplasm. It is found in the membrane. Functionally, rho GTPase-activating protein which may be involved in clathrin-mediated endocytosis. GTPase activators for the Rho-type GTPases act by converting them to an inactive GDP-bound state. Has activity toward CDC42 and RAC1. The chain is Rho GTPase-activating protein 27 from Homo sapiens (Human).